We begin with the raw amino-acid sequence, 202 residues long: Guanylyl cyclase-activating protein 1 (202 aa).

Residue Gly2 is the site of N-myristoyl glycine attachment. Position 3 is a deamidated asparagine (Asn3). 4 EF-hand domains span residues 31–49 (SGQL…KNLS), 51–86 (SASQ…VLKG), 87–122 (KVEQ…IRTI), and 131–166 (SAEE…DQML). Ca(2+) contacts are provided by Asp64, Asn66, Asp68, Tyr70, Glu75, Asp100, Asp102, Asn104, Cys106, Glu111, Asp144, Asn146, Asp148, Glu150, and Glu155.

In terms of assembly, homodimer. In terms of tissue distribution, in the retina, expressed in rod photoreceptors (at protein level). Expressed in cone photoreceptors.

It is found in the membrane. The protein localises to the photoreceptor inner segment. Its subcellular location is the cell projection. It localises to the cilium. The protein resides in the photoreceptor outer segment. Functionally, stimulates retinal guanylyl cyclase when free calcium ions concentration is low and inhibits guanylyl cyclase when free calcium ions concentration is elevated. This Ca(2+)-sensitive regulation of retinal guanylyl cyclase is a key event in recovery of the dark state of rod photoreceptors following light exposure. May be involved in cone photoreceptor light response and recovery of response in bright light. This is Guanylyl cyclase-activating protein 1 (Guca1a) from Mus musculus (Mouse).